The following is a 388-amino-acid chain: Succinate--CoA ligase [ADP-forming] subunit beta (388 aa).

In terms of domain architecture, ATP-grasp spans 9 to 244 (KEILRKFGVA…LDEEDPAEIE (236 aa)). ATP is bound by residues K46, 53–55 (GRG), E99, A102, and E107. 2 residues coordinate Mg(2+): N199 and D213. Substrate is bound by residues N264 and 321–323 (GIM).

This sequence belongs to the succinate/malate CoA ligase beta subunit family. As to quaternary structure, heterotetramer of two alpha and two beta subunits. Requires Mg(2+) as cofactor.

It carries out the reaction succinate + ATP + CoA = succinyl-CoA + ADP + phosphate. The enzyme catalyses GTP + succinate + CoA = succinyl-CoA + GDP + phosphate. Its pathway is carbohydrate metabolism; tricarboxylic acid cycle; succinate from succinyl-CoA (ligase route): step 1/1. Succinyl-CoA synthetase functions in the citric acid cycle (TCA), coupling the hydrolysis of succinyl-CoA to the synthesis of either ATP or GTP and thus represents the only step of substrate-level phosphorylation in the TCA. The beta subunit provides nucleotide specificity of the enzyme and binds the substrate succinate, while the binding sites for coenzyme A and phosphate are found in the alpha subunit. The chain is Succinate--CoA ligase [ADP-forming] subunit beta from Burkholderia lata (strain ATCC 17760 / DSM 23089 / LMG 22485 / NCIMB 9086 / R18194 / 383).